Consider the following 82-residue polypeptide: Cytochrome b559 subunit alpha (82 aa).

The helical transmembrane segment at 22 to 36 (VIHAVTLPSIFLAGF) threads the bilayer. His-24 is a binding site for heme.

Belongs to the PsbE/PsbF family. In terms of assembly, heterodimer of an alpha subunit and a beta subunit. PSII is composed of 1 copy each of membrane proteins PsbA, PsbB, PsbC, PsbD, PsbE, PsbF, PsbH, PsbI, PsbJ, PsbK, PsbL, PsbM, PsbT, PsbX, PsbY, PsbZ, Psb30/Ycf12, peripheral proteins PsbO, CyanoQ (PsbQ), PsbU, PsbV and a large number of cofactors. It forms dimeric complexes. Heme b is required as a cofactor.

The protein resides in the cellular thylakoid membrane. This b-type cytochrome is tightly associated with the reaction center of photosystem II (PSII). PSII is a light-driven water:plastoquinone oxidoreductase that uses light energy to abstract electrons from H(2)O, generating O(2) and a proton gradient subsequently used for ATP formation. It consists of a core antenna complex that captures photons, and an electron transfer chain that converts photonic excitation into a charge separation. This Synechococcus sp. (strain CC9605) protein is Cytochrome b559 subunit alpha.